A 119-amino-acid chain; its full sequence is Large ribosomal subunit protein uL22c (119 aa).

The protein belongs to the universal ribosomal protein uL22 family. Part of the 50S ribosomal subunit.

Its subcellular location is the plastid. The protein localises to the chloroplast. In terms of biological role, this protein binds specifically to 23S rRNA. Its function is as follows. The globular domain of the protein is located near the polypeptide exit tunnel on the outside of the subunit, while an extended beta-hairpin is found that lines the wall of the exit tunnel in the center of the 70S ribosome. The sequence is that of Large ribosomal subunit protein uL22c (rpl22) from Spirogyra maxima (Green alga).